Here is a 284-residue protein sequence, read N- to C-terminus: Tropomyosin (284 aa).

Met1 bears the N-acetylmethionine mark. Disordered stretches follow at residues 1–49 and 103–126; these read MDAI…NQKK and EERL…SERM. Positions 1–284 form a coiled coil; sequence MDAIKKKMQA…DQAFSELSGF (284 aa). The span at 12 to 45 shows a compositional bias: basic and acidic residues; it reads KLEKDNAMDKADTLEQQNKEANLRAEKTEEEIRA.

It belongs to the tropomyosin family. In terms of assembly, homodimer. Expressed in leg muscle and chest protection muscle (at protein level).

Its function is as follows. Tropomyosin, in association with the troponin complex, plays a central role in the calcium dependent regulation of muscle contraction. The protein is Tropomyosin of Chionoecetes opilio (Atlantic snow crab).